We begin with the raw amino-acid sequence, 557 residues long: Probable protein kinase UbiB (557 aa).

Residues Ser-121–Ala-509 form the Protein kinase domain. ATP-binding positions include Leu-127–Val-135 and Lys-154. The Proton acceptor role is filled by Asp-289. The next 2 membrane-spanning stretches (helical) occupy residues Val-506 to His-526 and Val-535 to Leu-555.

Belongs to the ABC1 family. UbiB subfamily.

It is found in the cell inner membrane. It functions in the pathway cofactor biosynthesis; ubiquinone biosynthesis [regulation]. Functionally, is probably a protein kinase regulator of UbiI activity which is involved in aerobic coenzyme Q (ubiquinone) biosynthesis. The polypeptide is Probable protein kinase UbiB (Xanthomonas oryzae pv. oryzae (strain MAFF 311018)).